A 448-amino-acid chain; its full sequence is Argininosuccinate synthase (448 aa).

ATP contacts are provided by residues 17 to 25 (AFSGGLDTS) and alanine 43. Tyrosine 99 serves as a coordination point for L-citrulline. ATP-binding residues include glycine 129 and threonine 131. Threonine 131, asparagine 135, and aspartate 136 together coordinate L-aspartate. Asparagine 135 serves as a coordination point for L-citrulline. Aspartate 136 provides a ligand contact to ATP. 2 residues coordinate L-citrulline: arginine 139 and serine 192. Aspartate 194 provides a ligand contact to ATP. L-citrulline is bound by residues threonine 201, glutamate 203, and glutamate 280.

Belongs to the argininosuccinate synthase family. Type 2 subfamily. Homotetramer.

Its subcellular location is the cytoplasm. The enzyme catalyses L-citrulline + L-aspartate + ATP = 2-(N(omega)-L-arginino)succinate + AMP + diphosphate + H(+). Its pathway is amino-acid biosynthesis; L-arginine biosynthesis; L-arginine from L-ornithine and carbamoyl phosphate: step 2/3. The polypeptide is Argininosuccinate synthase (Pectobacterium carotovorum subsp. carotovorum (strain PC1)).